A 407-amino-acid polypeptide reads, in one-letter code: Peptidase T (407 aa).

Position 81 (His81) interacts with Zn(2+). Asp83 is an active-site residue. Position 142 (Asp142) interacts with Zn(2+). The Proton acceptor role is filled by Glu176. Residues Glu177, Asp199, and His381 each coordinate Zn(2+).

It belongs to the peptidase M20B family. Requires Zn(2+) as cofactor.

It is found in the cytoplasm. The enzyme catalyses Release of the N-terminal residue from a tripeptide.. Functionally, cleaves the N-terminal amino acid of tripeptides. This chain is Peptidase T, found in Streptococcus pneumoniae (strain JJA).